We begin with the raw amino-acid sequence, 213 residues long: Ribonuclease HII (213 aa).

The region spanning 25–213 (KTLCGVDEAG…FKPVKQLLPH (189 aa)) is the RNase H type-2 domain. Residues D31, E32, and D124 each coordinate a divalent metal cation.

Belongs to the RNase HII family. Mn(2+) is required as a cofactor. The cofactor is Mg(2+).

The protein resides in the cytoplasm. The enzyme catalyses Endonucleolytic cleavage to 5'-phosphomonoester.. Its function is as follows. Endonuclease that specifically degrades the RNA of RNA-DNA hybrids. The protein is Ribonuclease HII of Magnetococcus marinus (strain ATCC BAA-1437 / JCM 17883 / MC-1).